The primary structure comprises 330 residues: Lysophospholipase D GDPD3 (330 aa).

A topological domain (cytoplasmic) is located at residue M1. A helical transmembrane segment spans residues 2–22; that stretch reads IPLLYFVLPTLGSYVMLSIFF. Over 23–200 the chain is Extracellular; it reads LRRPHLLHTP…ANPEMPMAFT (178 aa). The region spanning 39 to 308 is the GP-PDE domain; that stretch reads IRLAAHRGGS…DYPTALRHYL (270 aa). 3 residues coordinate a divalent metal cation: E71, D73, and H86. Residues 201-221 form a helical membrane-spanning segment; that stretch reads IWRSFWILLLYYLGLLPFVSI. The Cytoplasmic portion of the chain corresponds to 222–330; it reads PEKFFFCFLP…EALSCLSLKK (109 aa). Residues 311 to 330 form a disordered region; sequence QEEETQPPQPEALSCLSLKK.

It belongs to the glycerophosphoryl diester phosphodiesterase family. Highly expressed in stomach and kidney. In stomach detected in the glandular epithelium. Predominantly expressed in the stomach (at protein level).

Its subcellular location is the membrane. It localises to the cytoplasm. The protein localises to the perinuclear region. It is found in the endoplasmic reticulum membrane. The enzyme catalyses 1-hexadecanoyl-sn-glycero-3-phosphocholine + H2O = 1-hexadecanoyl-sn-glycero-3-phosphate + choline + H(+). The catalysed reaction is 1-O-hexadecyl-sn-glycero-3-phosphocholine + H2O = 1-O-hexadecyl-sn-glycero-3-phosphate + choline + H(+). It catalyses the reaction 1-O-(1Z-octadecenyl)-sn-glycero-3-phospho-N-hexadecanoyl-ethanolamine + H2O = 1-O-(1Z-octadecenyl)-sn-glycero-3-phosphate + N-hexadecanoylethanolamine + H(+). It carries out the reaction N-(5Z,8Z,11Z,14Z-eicosatetraenoyl)-1-(9Z-octadecenoyl)-sn-glycero-3-phosphoethanolamine + H2O = N-(5Z,8Z,11Z,14Z-eicosatetraenoyl)-ethanolamine + 1-(9Z-octadecenoyl)-sn-glycero-3-phosphate + H(+). The enzyme catalyses N,1-di-(9Z-octadecenoyl)-sn-glycero-3-phosphoethanolamine + H2O = N-(9Z-octadecenoyl) ethanolamine + 1-(9Z-octadecenoyl)-sn-glycero-3-phosphate + H(+). The catalysed reaction is N-hexadecanoyl-1-(9Z-octadecenoyl)-sn-glycero-3-phosphoethanolamine + H2O = N-hexadecanoylethanolamine + 1-(9Z-octadecenoyl)-sn-glycero-3-phosphate + H(+). It catalyses the reaction 1-hexadecanoyl-sn-glycero-3-phosphocholine + H2O = sn-glycerol 3-phosphocholine + hexadecanoate + H(+). Its activity is regulated as follows. Lysophospholipase D activity is stimulated by calcium. Loss of lysophospholipase D activity in presence of EDTA. Its function is as follows. Hydrolyzes lysoglycerophospholipids to produce lysophosphatidic acid (LPA) and the corresponding amines. Shows a preference for 1-O-alkyl-sn-glycero-3-phosphocholine (lyso-PAF), lysophosphatidylcholine (lyso-PC) and N-acylethanolamine lysophospholipids. Does not display glycerophosphodiester phosphodiesterase activity, since it cannot hydrolyze either glycerophosphoinositol or glycerophosphocholine. The chain is Lysophospholipase D GDPD3 from Mus musculus (Mouse).